The chain runs to 210 residues: Claudin-4 (210 aa).

Residues 1-7 (MASMGLQ) lie on the Cytoplasmic side of the membrane. Positions 1–103 (MASMGLQVLG…GMLLSVVGGK (103 aa)) are interaction with EPHA2. Residues 8-28 (VLGISLAVLGWLGIILSCALP) form a helical membrane-spanning segment. Over 29–81 (MWRVTAFIGSNIVTAQTSWEGLWMNCVVQSTGQMQCKMYDSMLALPQDLQAAR) the chain is Extracellular. Cysteine 54 and cysteine 64 are oxidised to a cystine. A helical transmembrane segment spans residues 82-102 (ALMVISIIVGALGMLLSVVGG). Residues 103–116 (KCTNCMEDETVKAK) are Cytoplasmic-facing. The helical transmembrane segment at 117–137 (IMITAGAVFIVASMLIMVPVS) threads the bilayer. Topologically, residues 138-160 (WTAHNVIRDFYNPMVASGQKREM) are extracellular. Residues 161–181 (GASLYVGWAASGLLLLGGGLL) traverse the membrane as a helical segment. Over 182 to 210 (CCSCPPRSNDKPYSAKYSAARSVPASNYV) the chain is Cytoplasmic. Tyrosine 209 carries the post-translational modification Phosphotyrosine; by EPHA2. The interactions with TJP1, TJP2 and TJP3 stretch occupies residues 209-210 (YV).

The protein belongs to the claudin family. As to quaternary structure, can form heteropolymeric strands with other claudins. Interacts with CLDN8. Interacts with CLDN1. Directly interacts with TJP1/ZO-1, TJP2/ZO-2 and TJP3/ZO-3. Interacts with EPHA2; phosphorylates CLDN4 and may regulate tight junctions. Post-translationally, phosphorylated. Phosphorylation by EPHA2 is stimulated by EFNA1 and alters interaction with TJP1. In terms of tissue distribution, expressed primarily in lung and kidney. Present in both cortical and medullar collecting ducts (at protein level).

The protein localises to the cell junction. It is found in the tight junction. The protein resides in the cell membrane. The catalysed reaction is chloride(in) = chloride(out). The enzyme catalyses bromide(in) = bromide(out). It catalyses the reaction iodide(out) = iodide(in). It carries out the reaction fluoride(in) = fluoride(out). In terms of biological role, can associate with other claudins to regulate tight junction structural and functional strand dynamics. May coassemble with CLDN8 into tight junction strands containing anion-selective channels that convey paracellular chloride permeability in renal collecting ducts. May integrate into CLDN3 strands to modulate localized tight junction barrier properties. May disrupt strand assembly of channel-forming CLDN2 and CLDN15 and inhibit cation conductance. Cannot form tight junction strands on its own. The protein is Claudin-4 of Mus musculus (Mouse).